The primary structure comprises 336 residues: Holliday junction branch migration complex subunit RuvB (336 aa).

Residues 1 to 181 (MDRIVEIEKV…FGMDFRLQFY (181 aa)) are large ATPase domain (RuvB-L). Residues Leu20, Arg21, Gly62, Lys65, Thr66, Thr67, 128 to 130 (EDF), Arg171, Tyr181, and Arg218 each bind ATP. Thr66 contributes to the Mg(2+) binding site. The tract at residues 182–252 (TSSELSRIVQ…RAKEGLNALG (71 aa)) is small ATPAse domain (RuvB-S). A head domain (RuvB-H) region spans residues 255 to 336 (SLGFDEMDIR…KIDIEKGLFE (82 aa)). DNA-binding residues include Arg309 and Arg314.

This sequence belongs to the RuvB family. As to quaternary structure, homohexamer. Forms an RuvA(8)-RuvB(12)-Holliday junction (HJ) complex. HJ DNA is sandwiched between 2 RuvA tetramers; dsDNA enters through RuvA and exits via RuvB. An RuvB hexamer assembles on each DNA strand where it exits the tetramer. Each RuvB hexamer is contacted by two RuvA subunits (via domain III) on 2 adjacent RuvB subunits; this complex drives branch migration. In the full resolvosome a probable DNA-RuvA(4)-RuvB(12)-RuvC(2) complex forms which resolves the HJ.

The protein resides in the cytoplasm. It catalyses the reaction ATP + H2O = ADP + phosphate + H(+). In terms of biological role, the RuvA-RuvB-RuvC complex processes Holliday junction (HJ) DNA during genetic recombination and DNA repair, while the RuvA-RuvB complex plays an important role in the rescue of blocked DNA replication forks via replication fork reversal (RFR). RuvA specifically binds to HJ cruciform DNA, conferring on it an open structure. The RuvB hexamer acts as an ATP-dependent pump, pulling dsDNA into and through the RuvAB complex. RuvB forms 2 homohexamers on either side of HJ DNA bound by 1 or 2 RuvA tetramers; 4 subunits per hexamer contact DNA at a time. Coordinated motions by a converter formed by DNA-disengaged RuvB subunits stimulates ATP hydrolysis and nucleotide exchange. Immobilization of the converter enables RuvB to convert the ATP-contained energy into a lever motion, pulling 2 nucleotides of DNA out of the RuvA tetramer per ATP hydrolyzed, thus driving DNA branch migration. The RuvB motors rotate together with the DNA substrate, which together with the progressing nucleotide cycle form the mechanistic basis for DNA recombination by continuous HJ branch migration. Branch migration allows RuvC to scan DNA until it finds its consensus sequence, where it cleaves and resolves cruciform DNA. The protein is Holliday junction branch migration complex subunit RuvB of Campylobacter concisus (strain 13826).